The primary structure comprises 525 residues: Keratin, type II cytoskeletal 4 (525 aa).

Residues 1-145 (MIARQSSVRG…DPEIQKIRTA (145 aa)) form a head region. R13 bears the Omega-N-methylarginine mark. The segment at 146–181 (EREQIKTLNNKFASFIDKVRFLEQQNKVLETKWNLL) is coil 1A. An IF rod domain is found at 146 to 459 (EREQIKTLNN…KLLEGEECRM (314 aa)). The segment at 182–200 (QQQTTTTSPKSLDPFFETY) is linker 1. Residues 201–292 (INALRKNLDT…VLYEAELAQM (92 aa)) form a coil 1B region. The segment at 293–316 (QTHVSDTSVVLSMDNNRNLDLDGI) is linker 12. Residues 317-455 (IAEVRAQYED…ATYRKLLEGE (139 aa)) form a coil 2 region. The tail stretch occupies residues 456 to 524 (ECRMSGECKS…SSATITKRSP (69 aa)).

The protein belongs to the intermediate filament family. In terms of assembly, heterotetramer of two type I and two type II keratins. Keratin-4 is generally associated with keratin-13. Expressed in the dorsal and ventral epithelium of the tongue. Highest expression levels are detected in the suprabasal layer with low levels detected in the basal cell layer. Within the suprabasal layer expression is highest in the spinous cells, decreases in the granular cells and is not detected in the stratum corneum.

This chain is Keratin, type II cytoskeletal 4 (Krt4), found in Mus musculus (Mouse).